The following is a 111-amino-acid chain: Phosphoribosyl-ATP pyrophosphatase (111 aa).

It belongs to the PRA-PH family.

It is found in the cytoplasm. It carries out the reaction 1-(5-phospho-beta-D-ribosyl)-ATP + H2O = 1-(5-phospho-beta-D-ribosyl)-5'-AMP + diphosphate + H(+). Its pathway is amino-acid biosynthesis; L-histidine biosynthesis; L-histidine from 5-phospho-alpha-D-ribose 1-diphosphate: step 2/9. The protein is Phosphoribosyl-ATP pyrophosphatase (hisE) of Pseudomonas aeruginosa (strain ATCC 15692 / DSM 22644 / CIP 104116 / JCM 14847 / LMG 12228 / 1C / PRS 101 / PAO1).